Here is a 607-residue protein sequence, read N- to C-terminus: Replication factor C large subunit (607 aa).

55 to 62 (GPAGIGKT) is a binding site for ATP. Residues 468–607 (EEEKPQKEGS…PKNQKTLFDF (140 aa)) are disordered. Residues 506 to 518 (TSEKKENSEKKEN) are compositionally biased toward basic and acidic residues. Over residues 548 to 558 (SESVEQKTSSK) the composition is skewed to polar residues.

The protein belongs to the activator 1 small subunits family. RfcL subfamily. In terms of assembly, heteromultimer composed of small subunits (RfcS) and large subunits (RfcL).

Part of the RFC clamp loader complex which loads the PCNA sliding clamp onto DNA. The polypeptide is Replication factor C large subunit (Methanosarcina acetivorans (strain ATCC 35395 / DSM 2834 / JCM 12185 / C2A)).